A 115-amino-acid chain; its full sequence is Large ribosomal subunit protein bL19 (115 aa).

This sequence belongs to the bacterial ribosomal protein bL19 family.

Its function is as follows. This protein is located at the 30S-50S ribosomal subunit interface and may play a role in the structure and function of the aminoacyl-tRNA binding site. The polypeptide is Large ribosomal subunit protein bL19 (rplS) (Thermotoga maritima (strain ATCC 43589 / DSM 3109 / JCM 10099 / NBRC 100826 / MSB8)).